Here is a 701-residue protein sequence, read N- to C-terminus: Protein mono-ADP-ribosyltransferase PARP12 (701 aa).

3 C3H1-type zinc fingers span residues 94–119, 150–179, and 180–202; these read LCRF…HSLT, WLLP…IKLH, and ICQY…HDFS. Residues 234-268 form a disordered region; sequence KNKSSAPSRVPPLFVPQGTSERKDSSGSVSPNTLS. Serine 258 is subject to Phosphoserine. A compositionally biased stretch (polar residues) spans 259 to 268; the sequence is SGSVSPNTLS. 2 consecutive C3H1-type zinc fingers follow at residues 270-297 and 271-296; these read EEGD…HFHL and EGDQ…VHFH. 2 consecutive WWE domains span residues 298–361 and 364–458; these read PYRW…RLST and SVTK…KVCR. At cysteine 474 the chain carries ADP-ribosylcysteine. The PARP catalytic domain maps to 484-698; the sequence is IPDYWDSSAL…ILLALGSLFS (215 aa). An ADP-ribosyl aspartic acid mark is found at aspartate 600 and aspartate 611.

The protein belongs to the ARTD/PARP family. As to quaternary structure, interacts with PARP11; this interaction plays a key role in zika virus suppression. Interacts with ISG15. Post-translationally, auto-mono-ADP-ribosylated. Phosphorylated by PRKD1.

It is found in the nucleus. Its subcellular location is the golgi apparatus. The protein resides in the trans-Golgi network. It localises to the cytoplasm. The protein localises to the stress granule. It carries out the reaction L-aspartyl-[protein] + NAD(+) = 4-O-(ADP-D-ribosyl)-L-aspartyl-[protein] + nicotinamide. The enzyme catalyses L-cysteinyl-[protein] + NAD(+) = S-(ADP-D-ribosyl)-L-cysteinyl-[protein] + nicotinamide + H(+). Functionally, mono-ADP-ribosyltransferase that mediates mono-ADP-ribosylation of target proteins. Acts as an antiviral factor by cooperating with PARP11 to suppress Zika virus replication. Displays anti-alphavirus activity during IFN-gamma immune activation by directly ADP-ribosylating the alphaviral non-structural proteins nsP3 and nsP4. Acts as a component of the PRKD1-driven regulatory cascade that selectively controls a major branch of the basolateral transport pathway by catalyzing the MARylation of GOLGA1. Acts also as a key regulator of mitochondrial function, protein translation, and inflammation. Inhibits PINK1/Parkin-dependent mitophagy and promotes cartilage degeneration by inhibiting the ubiquitination and SUMOylation of MFN1/2 by upregulating ISG15 and ISGylation. The chain is Protein mono-ADP-ribosyltransferase PARP12 from Homo sapiens (Human).